The following is a 406-amino-acid chain: Succinylornithine transaminase (406 aa).

K252 bears the N6-(pyridoxal phosphate)lysine mark.

Belongs to the class-III pyridoxal-phosphate-dependent aminotransferase family. AstC subfamily. Requires pyridoxal 5'-phosphate as cofactor.

It carries out the reaction N(2)-succinyl-L-ornithine + 2-oxoglutarate = N-succinyl-L-glutamate 5-semialdehyde + L-glutamate. It functions in the pathway amino-acid degradation; L-arginine degradation via AST pathway; L-glutamate and succinate from L-arginine: step 3/5. Catalyzes the transamination of N(2)-succinylornithine and alpha-ketoglutarate into N(2)-succinylglutamate semialdehyde and glutamate. Can also act as an acetylornithine aminotransferase. The sequence is that of Succinylornithine transaminase from Escherichia fergusonii (strain ATCC 35469 / DSM 13698 / CCUG 18766 / IAM 14443 / JCM 21226 / LMG 7866 / NBRC 102419 / NCTC 12128 / CDC 0568-73).